A 488-amino-acid polypeptide reads, in one-letter code: Probable cytosol aminopeptidase (488 aa).

Residues K254 and D259 each coordinate Mn(2+). K266 is a catalytic residue. Mn(2+) is bound by residues D277, D336, and E338. R340 is a catalytic residue.

It belongs to the peptidase M17 family. Requires Mn(2+) as cofactor.

The protein resides in the cytoplasm. The enzyme catalyses Release of an N-terminal amino acid, Xaa-|-Yaa-, in which Xaa is preferably Leu, but may be other amino acids including Pro although not Arg or Lys, and Yaa may be Pro. Amino acid amides and methyl esters are also readily hydrolyzed, but rates on arylamides are exceedingly low.. It catalyses the reaction Release of an N-terminal amino acid, preferentially leucine, but not glutamic or aspartic acids.. Presumably involved in the processing and regular turnover of intracellular proteins. Catalyzes the removal of unsubstituted N-terminal amino acids from various peptides. This Roseiflexus castenholzii (strain DSM 13941 / HLO8) protein is Probable cytosol aminopeptidase.